Reading from the N-terminus, the 325-residue chain is Alpha-cuprenene synthase COP6 (325 aa).

Mg(2+)-binding residues include Asp-102, Glu-166, Asn-224, Ser-228, and Glu-232.

The protein belongs to the trichodiene synthase family. The cofactor is Mg(2+).

Functionally, alpha-cuprenene synthase; part of the gene cluster that mediates the biosynthesis of alpha-cuprenene and oxidized derivatives. The alpha-cuprenene synthase COP6 is the only sesquiterpene synthase identified in C.cinereus that appears to be part of a biosynthetic gene cluster and is highly specific since it catalyzes the cyclization of (2E,6E)-farnesyl diphosphate into only one product, alpha-cuprenene. COP6 is also able to perform the cyclization of geranyl diphosphate. The cytochrome P450 monooxygenase COX2 then oxidizes the cyclohexadiene ring of alpha-cuprenene at positions 1 and 4, yielding first alpha-cuparene, followed by alpha-cuparophenol and a further yet unidentified compound resulting from one additional oxidation step. The cytochrome P450 monooxygenase COX1 then likely catalyzes the oxidation at position 9 of the pentane ring of alpha-cuprenene to give the corresponding hydroxy or ketone derivatives. This chain is Alpha-cuprenene synthase COP6, found in Coprinopsis cinerea (strain Okayama-7 / 130 / ATCC MYA-4618 / FGSC 9003) (Inky cap fungus).